Here is a 157-residue protein sequence, read N- to C-terminus: Endoribonuclease YbeY (157 aa).

Positions 114, 118, and 124 each coordinate Zn(2+).

The protein belongs to the endoribonuclease YbeY family. The cofactor is Zn(2+).

It is found in the cytoplasm. Functionally, single strand-specific metallo-endoribonuclease involved in late-stage 70S ribosome quality control and in maturation of the 3' terminus of the 16S rRNA. The sequence is that of Endoribonuclease YbeY from Klebsiella pneumoniae (strain 342).